The chain runs to 234 residues: Bradykinin-releasing enzyme KR-E-1 (234 aa).

A Peptidase S1 domain is found at 1-225 (VIGGDECNIN…YSDWIQSIIA (225 aa)). Intrachain disulfides connect Cys-7–Cys-139, Cys-26–Cys-42, Cys-74–Cys-232, Cys-118–Cys-186, Cys-150–Cys-165, and Cys-176–Cys-201. Asn-20 carries N-linked (GlcNAc...) asparagine glycosylation. Residues His-41 and Asp-86 each act as charge relay system in the active site. The Charge relay system role is filled by Ser-180.

The protein belongs to the peptidase S1 family. Snake venom subfamily. Monomer. In terms of tissue distribution, expressed by the venom gland.

Its subcellular location is the secreted. Bradykinin-releasing enzyme. Releases bradykinin from bovine HMW kininogen. Has anticoagulant activity. Increases permeability of capillaries by intradermal injection into rabbits. In Gloydius ussuriensis (Ussuri mamushi), this protein is Bradykinin-releasing enzyme KR-E-1.